The primary structure comprises 121 residues: Large ribosomal subunit protein bL12 (121 aa).

Belongs to the bacterial ribosomal protein bL12 family. As to quaternary structure, homodimer. Part of the ribosomal stalk of the 50S ribosomal subunit. Forms a multimeric L10(L12)X complex, where L10 forms an elongated spine to which 2 to 4 L12 dimers bind in a sequential fashion. Binds GTP-bound translation factors.

Functionally, forms part of the ribosomal stalk which helps the ribosome interact with GTP-bound translation factors. Is thus essential for accurate translation. This chain is Large ribosomal subunit protein bL12, found in Macrococcus caseolyticus (strain JCSC5402) (Macrococcoides caseolyticum).